Consider the following 81-residue polypeptide: Small ribosomal subunit protein uS17 (81 aa).

This sequence belongs to the universal ribosomal protein uS17 family. As to quaternary structure, part of the 30S ribosomal subunit.

One of the primary rRNA binding proteins, it binds specifically to the 5'-end of 16S ribosomal RNA. The sequence is that of Small ribosomal subunit protein uS17 from Protochlamydia amoebophila (strain UWE25).